Consider the following 256-residue polypeptide: MLFLLSPAKKLDYDTPVHVEHHTQPLFVEQSAALIKVLKTLSADDVAALMSLSPALAELNVARYAAWSRKFTQHNARQAVLAFNGDVYEGLQAGSLSPARLDWAQEHVAILSGLYGVLRPLDLMQPYRLEMGTRLATPKGKNLYEFWGSTIADYLNERLAGQKTPIVVNLASEEYFKSVDLKVLKARVVQCVFQDWKNGAWKVISFHAKRARGLMARYAIEHKVAKPEGLQKFDSEGYAFDASASSADKLVFRRKA.

Belongs to the UPF0246 family.

The sequence is that of UPF0246 protein Bpet1601 from Bordetella petrii (strain ATCC BAA-461 / DSM 12804 / CCUG 43448).